Here is a 385-residue protein sequence, read N- to C-terminus: Chaperone protein DnaJ (385 aa).

One can recognise a J domain in the interval 3–68 (DYYEILGVTR…QKRAAYDRFG (66 aa)). A CR-type zinc finger spans residues 135–213 (GAEVEITVPA…CHGHGQVRRE (79 aa)). Zn(2+) is bound by residues C148, C151, C165, C168, C187, C190, C201, and C204. CXXCXGXG motif repeat units follow at residues 148–155 (CEVCEGSG), 165–172 (CGTCGGAG), 187–194 (CPRCGGSG), and 201–208 (CSNCHGHG).

This sequence belongs to the DnaJ family. In terms of assembly, homodimer. Zn(2+) serves as cofactor.

The protein resides in the cytoplasm. Participates actively in the response to hyperosmotic and heat shock by preventing the aggregation of stress-denatured proteins and by disaggregating proteins, also in an autonomous, DnaK-independent fashion. Unfolded proteins bind initially to DnaJ; upon interaction with the DnaJ-bound protein, DnaK hydrolyzes its bound ATP, resulting in the formation of a stable complex. GrpE releases ADP from DnaK; ATP binding to DnaK triggers the release of the substrate protein, thus completing the reaction cycle. Several rounds of ATP-dependent interactions between DnaJ, DnaK and GrpE are required for fully efficient folding. Also involved, together with DnaK and GrpE, in the DNA replication of plasmids through activation of initiation proteins. The sequence is that of Chaperone protein DnaJ from Caulobacter vibrioides (strain ATCC 19089 / CIP 103742 / CB 15) (Caulobacter crescentus).